A 135-amino-acid chain; its full sequence is Glutaredoxin-C3 (135 aa).

Residues 26–134 (VARVERLASE…PLLKEAGALW (109 aa)) enclose the Glutaredoxin domain. Cys-46 and Cys-49 are joined by a disulfide. The short motif at 132 to 135 (ALWL) is the Responsive for interaction with TGA factors element.

The protein belongs to the glutaredoxin family. CC-type subfamily.

The protein localises to the cytoplasm. The protein resides in the nucleus. Functionally, has a glutathione-disulfide oxidoreductase activity in the presence of NADPH and glutathione reductase. Reduces low molecular weight disulfides and proteins. The sequence is that of Glutaredoxin-C3 (GRXC3) from Oryza sativa subsp. japonica (Rice).